The following is a 47-amino-acid chain: Light-harvesting protein B800/850/890 alpha-2 chain (47 aa).

At methionine 1 to arginine 12 the chain is on the cytoplasmic side. A helical membrane pass occupies residues threonine 13–leucine 33. Histidine 29 contacts a bacteriochlorophyll. At serine 34–glycine 47 the chain is on the periplasmic side.

The protein belongs to the antenna complex alpha subunit family. As to quaternary structure, the core complex is formed by different alpha and beta chains, binding bacteriochlorophyll molecules, and arranged most probably in tetrameric structures disposed around the reaction center. The non-pigmented gamma chains may constitute additional components.

It localises to the cell inner membrane. In terms of biological role, antenna complexes are light-harvesting systems, which transfer the excitation energy to the reaction centers. The chain is Light-harvesting protein B800/850/890 alpha-2 chain from Halorhodospira halophila (strain DSM 244 / SL1) (Ectothiorhodospira halophila (strain DSM 244 / SL1)).